We begin with the raw amino-acid sequence, 366 residues long: Protein FAM110B (366 aa).

Disordered stretches follow at residues 127–150 (SSEGSSSGSGHKHSSRNWPPHRDT), 163–182 (KVYPTPGRGSPQESSSHVSR), and 214–253 (IPCSSSAPPLPPKPKVAAMKSPDADQVEPACGVSRRPSLQ). Phosphoserine occurs at positions 234 and 297. The interval 313-333 (DCEQSQDSNSDLRNDDSANDR) is disordered. The segment covering 322-331 (SDLRNDDSAN) has biased composition (basic and acidic residues).

The protein belongs to the FAM110 family.

The protein resides in the cytoplasm. The protein localises to the cytoskeleton. It localises to the microtubule organizing center. It is found in the centrosome. This chain is Protein FAM110B (Fam110b), found in Rattus norvegicus (Rat).